The primary structure comprises 179 residues: Large ribosomal subunit protein uL6 (179 aa).

The protein belongs to the universal ribosomal protein uL6 family. In terms of assembly, part of the 50S ribosomal subunit.

In terms of biological role, this protein binds to the 23S rRNA, and is important in its secondary structure. It is located near the subunit interface in the base of the L7/L12 stalk, and near the tRNA binding site of the peptidyltransferase center. This Mycobacterium ulcerans (strain Agy99) protein is Large ribosomal subunit protein uL6.